The sequence spans 368 residues: Abasic site processing protein YMR114C (368 aa).

Cysteine 2 functions as the Nucleophile in the catalytic mechanism. At cysteine 2 the chain carries Thiazolidine linkage to a ring-opened DNA abasic site. A disordered region spans residues 25–48; that stretch reads VNTPKDASSNSQHPHDEEDTKDQP. The span at 37–46 shows a compositional bias: basic and acidic residues; sequence HPHDEEDTKD. The active site involves glutamate 132. Residues 270 to 368 are disordered; the sequence is LENDNEQGID…DSRGKKKIKK (99 aa). 3 stretches are compositionally biased toward basic and acidic residues: residues 281-296, 304-313, and 326-349; these read RGVK…DVFN, NSYDGLKKNE, and IGDR…EKRN. Serine 338 carries the phosphoserine modification.

The protein belongs to the SOS response-associated peptidase family.

The protein localises to the chromosome. Its activity is regulated as follows. Formation and reversal of DNA-protein cross-link depends on DNA context. Catalyzes formation of the thiazolidine linkage in presence of abasic sites in single-stranded DNA. Mediates the reversal of the thiazolidine cross-link in presence of double stranded DNA. Its function is as follows. Sensor of abasic sites in single-stranded DNA (ssDNA) required to preserve genome integrity by promoting error-free repair of abasic sites. Recognizes and binds abasic sites in ssDNA at replication forks and chemically modifies the lesion by forming a covalent cross-link with DNA: forms a stable thiazolidine linkage between a ring-opened abasic site and the alpha-amino and sulfhydryl substituents of its N-terminal catalytic cysteine residue. The DNA-protein cross-link is then reversed: able to catalyze the reversal of the thiazolidine cross-link and cycle between a cross-link and a non-cross-linked state depending on DNA context: mediates self-reversal of the thiazolidine cross-link in double stranded DNA. Acts as a protease: mediates autocatalytic processing of its N-terminal methionine in order to expose the catalytic cysteine. This Saccharomyces cerevisiae (strain ATCC 204508 / S288c) (Baker's yeast) protein is Abasic site processing protein YMR114C.